The primary structure comprises 2167 residues: MTHSPATSEDEERHSASECPEGGSESDSSPDGPGRGPQGTRGRGSGAPGNLASTRGLQGRSMSVPDDAHFSMMVFRIGIPDLHQTKCLRFNPDATIWTAKQQVLCALSESLQDVLNYGLFQPATSGRDANFLEEERLLREYPQSFEKGVPYLEFRYKTRVYKQTNLDEKQLAKLHTKTGLKKFLEYVQLGTSDKVARLLDKGLDPNYHDSDSGETPLTLAAQTEGSVEVIRTLCLGGAHIDFRARDGMTALHKAACARHCLALTALLDLGGSPNYKDRRGLTPLFHTAMVGGDPRCCELLLYNRAQLGIADENGWQEIHQACQRGHSQHLEHLLFYGAEPGAQNASGNTALHICALYNKETCARILLYRGANKDVKNNNGQTPFQVAVIAGNFELGELIRNHREQDVVPFQESPKYAARRRGPPGAGLTVPPALLRANSDTSMALPDWMVFSAPGASSSGTPGPTSGPQGQSQPSAPSTKLSSGTLRSASSPRGARARSPSRGRHPEDAKRQPRGRPSSSGTPRDGPAGGTGGSGGPGGSLGSRGRRRKLYSAVPGRSFMAVKSYQAQGEGEISLSKGEKIKVLSIGEGGFWEGQVKGRVGWFPSDCLEEVANRSQEGRQESRSDKAKRLFRHYTVGSYDSFDAPSLIDGIDSGSDYIIKEKTVLLQKKDSEGFGFVLRGAKAQTPIEEFTPTPAFPALQYLESVDEGGVAWRAGLRMGDFLIEVNGQNVVKVGHRQVVNMIRQGGNTLMVKVVMVTRHPDMDEAVHKKASQQAKRLPPPAISLRSKSMTSELEEMVSPWKKKIEYEQQPAAVPSMEKKRTVYQMALNKLDEILAAAQQTISASESPGPGGLASLGKHRPKGFFATESSFDPHHRSQPSYDRPSFLPPGPGLMLRQKSIGAAEDDRPYLAPPAMKFSRSLSVPGSEDIPPPPTTSPPEPPYSTPPAPSSSGRLTPSPRGGPFNPSSGGPLPASSPSSFDGPSPPDTRGGGREKSLYHSAALPPAHHHPPHHHHHHAPPPQPHHHHAHPPHPPEMETGGSPDDPPPRLALGPQPSLRGWRGGGPSPTSGAPSPSHHSSSGGSSGPTQAPALRYFQLPPRAASAAMYVPARSGRGRKGPLVKQTKVEGEPQKGSIPSASSPTSPALPRSEPPPAGPSEKNSIPIPTIIIKAPSTSSSGRSSQGSSTEAEPPTQPDGAGGGGSSPSPAPATSPVPPSPSPVPTPASPSGPATLDFTSQFGAALVGAARREGGWQNEARRRSTLFLSTDAGDEDGGDSGLGPGGPPGPRLRHSKSIDEGMFSAEPYLRLESGGSSGGYGAYAAGSRAYGGSGSSSAFTSFLPPRPLVHPLTGKALDPASPLGLALAARERALKESSEGGGTPQPPPRPPSPRYDAPPPTLHHHSPHSPHSPHARHEPVLRLWGDPARRELGYRAGLGSQEKALTASPPAARRSLLHRLPPTAPGVGPLLLQLGPEPPTPHPGVSKAWRTAAPEEPERLPLHVRFLENCQARPPPAGTRGSSTEDGPGVPPPSPRRVLPTSPTSPRGNEENGLPLLVLPPPAPSVDVDDGEFLFAEPLPPPLEFSNSFEKPESPLTPGPPHPLPDPPSPATPLPAAPPPAVAAAPPTLDSTASSLTSYDSEVATLTQGAPAAPGDPPAPGPPAPAAPAPPAPQPGPDPPPGTDSGIEEVDSRSSSDHPLETISSASTLSSLSAEGGGNTGGVAGGGAGVASGTELLDTYVAYLDGQAFGGSGTPGPPYPPQLMTPSKLRGRALGTSGNLRPGPSGGLRDPVTPTSPTVSVTGAGTDGLLALSACPGPSTAGVAGGPVAVEPEVPPVPLPAASSLPRKLLPWEEGPGPPPPPLPGPLSQPQASALATVKASIISELSSKLQQFGGSSTAGGALPWARGGSGGSTDSHHGGASYIPERTSSLQRQRLSEDSQTSLLSKPSSSIFQNWPKPPLPPLPTGSGVSSSTAAAPGATSPSASSASASTRHLQGVEFEMRPPLLRRAPSPSLLPASDHKVSPAPRPSSLPILPSGPIYPGLFDIRSSPTGGAGGSTDPFAPVFVPPHPGISGGLGGALSGASRSLSPTRLLSLPPDKPFGAKPLGFWTKFDVADWLEWLGLSEHRAQFLDHEIDGSHLPALTKEDYVDLGVTRVGHRMNIDRALKFFLER.

The disordered stretch occupies residues 1-63; sequence MTHSPATSED…TRGLQGRSMS (63 aa). A compositionally biased stretch (low complexity) spans 17 to 32; the sequence is SECPEGGSESDSSPDG. The segment covering 33–47 has biased composition (gly residues); that stretch reads PGRGPQGTRGRGSGA. Omega-N-methylarginine is present on Arg-43. Tyr-186 is modified (phosphotyrosine). 7 ANK repeats span residues 195-210, 212-245, 246-278, 279-312, 313-345, 346-378, and 379-395; these read VARL…YHDS, SGET…FRAR, DGMT…YKDR, RGLT…IADE, NGWQ…AQNA, SGNT…VKNN, and NGQT…NFEL. Disordered stretches follow at residues 413–432 and 453–546; these read SPKY…TVPP and APGA…SRGR. Low complexity predominate over residues 453–479; that stretch reads APGASSSGTPGPTSGPQGQSQPSAPST. Gly residues predominate over residues 527–542; it reads PAGGTGGSGGPGGSLG. At Ser-540 the chain carries Phosphoserine. Arg-544 carries the omega-N-methylarginine modification. In terms of domain architecture, SH3 spans 554 to 613; that stretch reads VPGRSFMAVKSYQAQGEGEISLSKGEKIKVLSIGEGGFWEGQVKGRVGWFPSDCLEEVAN. 4 positions are modified to phosphoserine: Ser-638, Ser-641, Ser-671, and Ser-791. The PDZ domain maps to 663–757; sequence TVLLQKKDSE…TLMVKVVMVT (95 aa). A disordered region spans residues 841 to 894; that stretch reads ISASESPGPGGLASLGKHRPKGFFATESSFDPHHRSQPSYDRPSFLPPGPGLML. At Ser-898 the chain carries Phosphoserine. Disordered regions lie at residues 917-1233, 1245-1294, 1308-1417, 1429-1725, 1740-1787, 1842-1866, 1898-1988, and 2002-2029; these read SRSL…LDFT, RREG…SIDE, GGSS…VLRL, RAGL…AGVA, GQAF…DPVT, KLLP…QPQA, PWAR…STRH, and RRAP…LPIL. Over residues 928–947 the composition is skewed to pro residues; the sequence is IPPPPTTSPPEPPYSTPPAP. Arg-958 carries the omega-N-methylarginine modification. Residues 964–980 show a composition bias toward low complexity; it reads PSSGGPLPASSPSSFDG. The segment covering 1004–1028 has biased composition (basic residues); it reads AHHHPPHHHHHHAPPPQPHHHHAHP. Arg-1059 carries the omega-N-methylarginine modification. Residues 1064-1085 show a composition bias toward low complexity; the sequence is SPTSGAPSPSHHSSSGGSSGPT. Arg-1098 and Arg-1109 each carry omega-N-methylarginine. 2 stretches are compositionally biased toward low complexity: residues 1132–1146 and 1171–1184; these read SIPS…ALPR and STSS…GSST. A compositionally biased stretch (pro residues) spans 1203–1224; sequence SPAPATSPVPPSPSPVPTPASP. Positions 1245 to 1256 are enriched in basic and acidic residues; the sequence is RREGGWQNEARR. Residue Arg-1257 is modified to Asymmetric dimethylarginine. The residue at position 1291 (Ser-1291) is a Phosphoserine. Over residues 1363-1372 the composition is skewed to basic and acidic residues; sequence ARERALKESS. Residues 1378–1395 are compositionally biased toward pro residues; that stretch reads PQPPPRPPSPRYDAPPPT. Residues 1396–1408 are compositionally biased toward basic residues; sequence LHHHSPHSPHSPH. Arg-1429 bears the Omega-N-methylarginine mark. Ser-1442 is modified (phosphoserine). 2 stretches are compositionally biased toward low complexity: residues 1459 to 1469 and 1530 to 1541; these read PGVGPLLLQLG and RRVLPTSPTSPR. A compositionally biased stretch (pro residues) spans 1589-1615; that stretch reads PLTPGPPHPLPDPPSPATPLPAAPPPA. A compositionally biased stretch (polar residues) spans 1624 to 1641; the sequence is DSTASSLTSYDSEVATLT. Residues 1648–1676 are compositionally biased toward pro residues; it reads PGDPPAPGPPAPAAPAPPAPQPGPDPPPG. Residues 1684–1694 show a composition bias toward basic and acidic residues; the sequence is VDSRSSSDHPL. The segment covering 1695 to 1708 has biased composition (low complexity); that stretch reads ETISSASTLSSLSA. Over residues 1709 to 1724 the composition is skewed to gly residues; the sequence is EGGGNTGGVAGGGAGV. Over residues 1850 to 1861 the composition is skewed to pro residues; the sequence is PGPPPPPLPGPL. Arg-1901 carries the omega-N-methylarginine modification. Composition is skewed to low complexity over residues 1934 to 1945, 1960 to 1985, and 2002 to 2012; these read SQTSLLSKPSSS, TGSG…ASAS, and RRAPSPSLLPA. Arg-2022, Arg-2042, and Arg-2080 each carry omega-N-methylarginine. Positions 2104–2167 constitute an SAM domain; it reads WTKFDVADWL…DRALKFFLER (64 aa).

Belongs to the SHANK family. May homomultimerize via its SAM domain. Interacts with the C-terminus of SSTR2 via the PDZ domain. Interacts with SHARPIN, SPTAN1 and DLGAP1/GKAP. Part of a complex with DLG4/PSD-95 and DLGAP1/GKAP. Interacts with BAIAP2. Interacts with IGSF9. Interacts with HOMER1 and HOMER3. In terms of tissue distribution, expressed only in brain (neuropil of cortex, CA1 region hippocampus and molecular layer of cerebellum).

Its subcellular location is the cytoplasm. The protein resides in the synapse. It is found in the postsynaptic density. Seems to be an adapter protein in the postsynaptic density (PSD) of excitatory synapses that interconnects receptors of the postsynaptic membrane including NMDA-type and metabotropic glutamate receptors, and the actin-based cytoskeleton. Plays a role in the structural and functional organization of the dendritic spine and synaptic junction. Overexpression promotes maturation of dendritic spines and the enlargement of spine heads via its ability to recruit Homer to postsynaptic sites, and enhances presynaptic function. This Rattus norvegicus (Rat) protein is SH3 and multiple ankyrin repeat domains protein 1 (Shank1).